We begin with the raw amino-acid sequence, 457 residues long: Histidine--tRNA ligase (457 aa).

It belongs to the class-II aminoacyl-tRNA synthetase family. As to quaternary structure, homodimer.

The protein resides in the cytoplasm. It carries out the reaction tRNA(His) + L-histidine + ATP = L-histidyl-tRNA(His) + AMP + diphosphate + H(+). The sequence is that of Histidine--tRNA ligase from Mesoplasma florum (strain ATCC 33453 / NBRC 100688 / NCTC 11704 / L1) (Acholeplasma florum).